Consider the following 428-residue polypeptide: 3-phosphoshikimate 1-carboxyvinyltransferase (428 aa).

Positions 20, 21, and 25 each coordinate 3-phosphoshikimate. Lysine 20 lines the phosphoenolpyruvate pocket. The phosphoenolpyruvate site is built by glycine 92 and arginine 120. Positions 166, 168, 314, and 341 each coordinate 3-phosphoshikimate. Glutamine 168 is a binding site for phosphoenolpyruvate. Aspartate 314 functions as the Proton acceptor in the catalytic mechanism. Phosphoenolpyruvate contacts are provided by arginine 345 and arginine 387.

It belongs to the EPSP synthase family. In terms of assembly, monomer.

The protein localises to the cytoplasm. The enzyme catalyses 3-phosphoshikimate + phosphoenolpyruvate = 5-O-(1-carboxyvinyl)-3-phosphoshikimate + phosphate. The protein operates within metabolic intermediate biosynthesis; chorismate biosynthesis; chorismate from D-erythrose 4-phosphate and phosphoenolpyruvate: step 6/7. In terms of biological role, catalyzes the transfer of the enolpyruvyl moiety of phosphoenolpyruvate (PEP) to the 5-hydroxyl of shikimate-3-phosphate (S3P) to produce enolpyruvyl shikimate-3-phosphate and inorganic phosphate. This Listeria welshimeri serovar 6b (strain ATCC 35897 / DSM 20650 / CCUG 15529 / CIP 8149 / NCTC 11857 / SLCC 5334 / V8) protein is 3-phosphoshikimate 1-carboxyvinyltransferase.